The primary structure comprises 829 residues: MDSWFILVLFGSGLIHVSANNATTVSPSLGTTRLIKTSTTELAKEENKTSNSTSSVISLSVAPTFSPNLTLEPTYVTTVNSSHSDNGTRRAASTESGGTTISPNGSWLIENQFTDAITEPWEGNSSTAATTPETFPPADETPIIAVMVALSSLLVIVFIIIVLYMLRFKKYKQAGSHSNSFRLSNGRTEDVEPQSVPLLARSPSTNRKYPPLPVDKLEEEINRRMADDNKLFREEFNALPACPIQATCEAASKEENKEKNRYVNILPFLSLAVSKDAVKALNKTTPLLERRFIGKSNSRGCLSDDHSRVHLTPVEGVPDSDYINASFINGYQEKNKFIAAQGPKEETVNDFWRMIWEQNTATIVMVTNLKERKECKCAQYWPDQGCWTYGNVRVSVEDVTVLVDYTVRKFCIQQVGDVTNRKPQRLITQFHFTSWPDFGVPFTPIGMLKFLKKVKACNPQYAGAIVVHCSAGVGRTGTFVVIDAMLDMMHSERKVDVYGFVSRIRAQRCQMVQTDMQYVFIYQALLEHYLYGDTELEVTSLETHLQKIYNKIPGTSNNGLEEEFKKLTSIKIQNDKMRTGNLPANMKKNRVLQIIPYEFNRVIIPVKRGEENTDYVNASFIDGYRQKDSYIASQGPLLHTIEDFWRMIWEWKSCSIVMLTELEERGQEKCAQYWPSDGLVSYGDITVELKKEEECESYTVRDLLVTNTRENKSRQIRQFHFHGWPEVGIPSDGKGMINIIAAVQKQQQQSGNHPITVHCSAGAGRTGTFCALSTVLERVKAEGILDVFQTVKSLRLQRPHMVQTLEQYEFCYKVVQEYIDAFSDYANFK.

The first 19 residues, 1 to 19 (MDSWFILVLFGSGLIHVSA), serve as a signal peptide directing secretion. Residues 20-142 (NNATTVSPSL…ETFPPADETP (123 aa)) are Extracellular-facing. Residues N21, N47, N51, N68, N80, N86, N104, and N124 are each glycosylated (N-linked (GlcNAc...) asparagine). A disordered region spans residues 79 to 106 (VNSSHSDNGTRRAASTESGGTTISPNGS). The chain crosses the membrane as a helical span at residues 143–166 (IIAVMVALSSLLVIVFIIIVLYML). Residues 167 to 829 (RFKKYKQAGS…DAFSDYANFK (663 aa)) are Cytoplasmic-facing. 2 positions are modified to phosphoserine: S202 and S204. Tyrosine-protein phosphatase domains follow at residues 232-528 (FREE…LLEH) and 560-818 (LEEE…VQEY). Substrate is bound by residues D437, 469–475 (CSAGVGR), and Q513. The active-site Phosphocysteine intermediate is the C469. Residue C759 is the Phosphocysteine intermediate of the active site. At Y825 the chain carries Phosphotyrosine.

Belongs to the protein-tyrosine phosphatase family. Receptor class 4 subfamily. Part of a complex comprised of PTPRA, BCAR1, BCAR3 (via SH2 domain), and SRC. Within the complex, interacts (when phosphorylated on Tyr-825) with BCAR3 (via SH2 domain). Interacts with GRB2. Post-translationally, integrin binding to extracellular matrix induces phosphorylation at Tyr-825 which induces PTPRA localization and recruitment of BCAR3, BCAR1 and CRK to focal adhesions. In terms of tissue distribution, widely expressed. Highest expression in brain and kidney.

It is found in the cell membrane. It localises to the cell junction. The protein localises to the focal adhesion. The catalysed reaction is O-phospho-L-tyrosyl-[protein] + H2O = L-tyrosyl-[protein] + phosphate. In terms of biological role, tyrosine protein phosphatase which is involved in integrin-mediated focal adhesion formation. Following integrin engagement, specifically recruits BCAR3, BCAR1 and CRK to focal adhesions thereby promoting SRC-mediated phosphorylation of BRAC1 and the subsequent activation of PAK and small GTPase RAC1 and CDC42. This is Receptor-type tyrosine-protein phosphatase alpha (Ptpra) from Mus musculus (Mouse).